Here is a 926-residue protein sequence, read N- to C-terminus: Disease resistance protein RPM1 (926 aa).

The tract at residues 10–45 (IGRILSVLENETLLLSGVHGEIDKMKKELLIMKSFL) is leucine-zipper. One can recognise an NB-ARC domain in the interval 153 to 467 (DAKWVNNISE…AQRFVEPIRG (315 aa)). 200-207 (GMGGSGKT) contacts ATP. 11 LRR repeats span residues 561 to 580 (LHSL…LPSL), 581 to 603 (NLLR…LVTM), 605 to 625 (NLKY…NFHK), 626 to 649 (LVNL…MWKL), 686 to 707 (LQVM…CMTQ), 708 to 731 (LTRI…LNKI), 756 to 777 (TASI…WFNT), 778 to 804 (LQNL…TLPR), 825 to 836 (FQNLKILEIVQM), 837 to 859 (KHLT…YVRA), and 876 to 900 (LQEL…SVDR).

It belongs to the disease resistance NB-LRR family. In terms of assembly, interacts directly with RIN4 via its N-terminal region. Interacts (via N-terminus) with RIN2 and RIN3 (via C-terminus). Interacts with TIP49A, a protein known to interact with the TATA binding protein complex (TBP). Binds to MORC1/CRT1. Interacts, via its NB-ARC domain, with RIN13.

The protein localises to the endomembrane system. The protein resides in the cell membrane. Its function is as follows. Disease resistance (R) protein that specifically recognizes the AvrRpm1 type III effector avirulence protein from Pseudomonas syringae. Resistance proteins guard the plant against pathogens that contain an appropriate avirulence protein via an indirect interaction with this avirulence protein. That triggers a defense system including the hypersensitive response (HR), which restricts the pathogen growth. Acts via its interaction with RIN4, and probably triggers the plant resistance when RIN4 is phosphorylated by AvrRpm1. It is then degraded at the onset of the hypersensitive response. This Arabidopsis thaliana (Mouse-ear cress) protein is Disease resistance protein RPM1.